Here is a 366-residue protein sequence, read N- to C-terminus: Ferredoxin--NADP reductase, leaf isozyme 2, chloroplastic (366 aa).

A chloroplast-targeting transit peptide spans 1–48 (MAAVNTVSSLPCSKAGAAVAGGAPRPSTCSVFYPPRCWSKRSSGNGVR). The region spanning 87–209 (KEPYTGRCLL…TGPVGKEMLM (123 aa)) is the FAD-binding FR-type domain. Residues 145–148 (RLYS), 166–168 (CVK), Y172, and 183–185 (VCS) each bind FAD. Residues S148 and K168 each contribute to the NADP(+) site. C184 and C189 are joined by a disulfide. Position 185 is a phosphoserine (S185). T216 bears the Phosphothreonine mark. Position 224 (T224) interacts with FAD. Residues T224, 256 to 257 (VP), 286 to 287 (SR), K296, 325 to 326 (GL), and E364 contribute to the NADP(+) site.

It belongs to the ferredoxin--NADP reductase type 1 family. In terms of assembly, heterodimer with LFNR1. Component of high molecular weight thylakoid LFNRs-containing protein complexes containing LIR1, LFNR1, LFNR2, TIC62 and TROL proteins. Interacts directly with LFNR1 and LFNR2; LIR1 increases the affinity of LFNR1 and LFNR2 for TIC62 and subsequent thylakoid relocalization. It depends on FAD as a cofactor. May form interchain disulfide bonds with LIR1.

It localises to the plastid. Its subcellular location is the chloroplast stroma. It is found in the chloroplast thylakoid membrane. It carries out the reaction 2 reduced [2Fe-2S]-[ferredoxin] + NADP(+) + H(+) = 2 oxidized [2Fe-2S]-[ferredoxin] + NADPH. It participates in energy metabolism; photosynthesis. Its function is as follows. Plays a key role in regulating the relative amounts of cyclic and non-cyclic electron flow to meet the demands of the plant for ATP and reducing power. The sequence is that of Ferredoxin--NADP reductase, leaf isozyme 2, chloroplastic from Oryza sativa subsp. indica (Rice).